Here is a 147-residue protein sequence, read N- to C-terminus: Small ribosomal subunit protein uS12 (147 aa).

It belongs to the universal ribosomal protein uS12 family. In terms of assembly, part of the 30S ribosomal subunit.

With S4 and S5 plays an important role in translational accuracy. Located at the interface of the 30S and 50S subunits. In Pyrobaculum arsenaticum (strain DSM 13514 / JCM 11321 / PZ6), this protein is Small ribosomal subunit protein uS12.